The sequence spans 336 residues: Sulfate/thiosulfate import ATP-binding protein CysA (336 aa).

Residues Ile-3–Ile-233 form the ABC transporter domain. Gly-35–Ser-42 serves as a coordination point for ATP.

It belongs to the ABC transporter superfamily. Sulfate/tungstate importer (TC 3.A.1.6) family. The complex is composed of two ATP-binding proteins (CysA), two transmembrane proteins (CysT and CysW) and a solute-binding protein (CysP).

It localises to the cell inner membrane. It catalyses the reaction sulfate(out) + ATP + H2O = sulfate(in) + ADP + phosphate + H(+). The enzyme catalyses thiosulfate(out) + ATP + H2O = thiosulfate(in) + ADP + phosphate + H(+). In terms of biological role, part of the ABC transporter complex CysAWTP involved in sulfate/thiosulfate import. Responsible for energy coupling to the transport system. In Thermosynechococcus vestitus (strain NIES-2133 / IAM M-273 / BP-1), this protein is Sulfate/thiosulfate import ATP-binding protein CysA.